Here is a 150-residue protein sequence, read N- to C-terminus: 3-hydroxyacyl-[acyl-carrier-protein] dehydratase FabZ (150 aa).

Histidine 52 is an active-site residue.

It belongs to the thioester dehydratase family. FabZ subfamily.

The protein localises to the cytoplasm. It carries out the reaction a (3R)-hydroxyacyl-[ACP] = a (2E)-enoyl-[ACP] + H2O. Its function is as follows. Involved in unsaturated fatty acids biosynthesis. Catalyzes the dehydration of short chain beta-hydroxyacyl-ACPs and long chain saturated and unsaturated beta-hydroxyacyl-ACPs. The sequence is that of 3-hydroxyacyl-[acyl-carrier-protein] dehydratase FabZ from Variovorax paradoxus (strain S110).